A 478-amino-acid chain; its full sequence is Proline--tRNA ligase (478 aa).

This sequence belongs to the class-II aminoacyl-tRNA synthetase family. ProS type 3 subfamily. Homodimer.

The protein localises to the cytoplasm. It carries out the reaction tRNA(Pro) + L-proline + ATP = L-prolyl-tRNA(Pro) + AMP + diphosphate. Catalyzes the attachment of proline to tRNA(Pro) in a two-step reaction: proline is first activated by ATP to form Pro-AMP and then transferred to the acceptor end of tRNA(Pro). This Methanothrix thermoacetophila (strain DSM 6194 / JCM 14653 / NBRC 101360 / PT) (Methanosaeta thermophila) protein is Proline--tRNA ligase.